The chain runs to 542 residues: Zinc finger protein 280A (542 aa).

The interval 66–185 is disordered; it reads VTPGSNSRRK…RDSKRVKLRD (120 aa). Over residues 107 to 122 the composition is skewed to polar residues; sequence EGRSTDSPVTMKSSSE. The span at 128 to 143 shows a compositional bias: low complexity; that stretch reads SSPQVVSPSSSDSLPP. Over residues 161–185 the composition is skewed to basic and acidic residues; it reads SSPDSKRLSTSDINSRDSKRVKLRD. 4 C2H2-type zinc fingers span residues 334-357, 364-387, 423-445, and 451-474; these read TTCQ…DSVH, AVCK…KDHH, LLCL…CWRH, and LQCS…TKDH. Residues 499–520 are compositionally biased toward polar residues; the sequence is QPGSSGMASVIVSNTDPQSSPV. The segment at 499 to 542 is disordered; sequence QPGSSGMASVIVSNTDPQSSPVKTKKKTAMNTRDSRLPCSKDSS.

The protein resides in the nucleus. In terms of biological role, may function as a transcription factor. This Homo sapiens (Human) protein is Zinc finger protein 280A (ZNF280A).